A 265-amino-acid polypeptide reads, in one-letter code: Glutamate racemase (265 aa).

Substrate-binding positions include 12-13 (DS) and 44-45 (YG). Cysteine 75 acts as the Proton donor/acceptor in catalysis. 76–77 (NT) provides a ligand contact to substrate. Cysteine 186 (proton donor/acceptor) is an active-site residue. Residue 187 to 188 (TH) participates in substrate binding.

Belongs to the aspartate/glutamate racemases family.

It carries out the reaction L-glutamate = D-glutamate. It participates in cell wall biogenesis; peptidoglycan biosynthesis. In terms of biological role, provides the (R)-glutamate required for cell wall biosynthesis. This chain is Glutamate racemase, found in Pseudomonas putida (strain ATCC 700007 / DSM 6899 / JCM 31910 / BCRC 17059 / LMG 24140 / F1).